A 360-amino-acid chain; its full sequence is MLVWLAEHLVKYYSGFNVFSYLTFRAIVSLLTALFISLWMGPRMIARLQKLSFGQVVRNDGPESHFSKRGTPTMGGIMILTAIVISVLLWAYPSNPYVWCVLVVLIGYGIIGFVDDYRKVVRKDTKGLIARWKYFWMSVIALGVAFALYLVGKDTPVTQLVVPFFKDVMPQLGLFYILLSYFVIVGTGNAVNLTDGLDGLAIMPTVFVAAGFALVAWATGNMNFANYLHIPYLRHAGELVIVCTAIVGAGLGFLWFNTYPAQVFMGDVGSLALGGALGIIAVLLRQEFLLVIMGGVFVVETLSVILQVGSFKLRGQRIFRMAPIHHHYELKGWPEPRVIVRFWIISLMLVLIGLATLKVR.

At 1–25 (MLVWLAEHLVKYYSGFNVFSYLTFR) the chain is on the periplasmic side. A helical transmembrane segment spans residues 26–46 (AIVSLLTALFISLWMGPRMIA). The Cytoplasmic segment spans residues 47–71 (RLQKLSFGQVVRNDGPESHFSKRGT). The chain crosses the membrane as a helical span at residues 72–92 (PTMGGIMILTAIVISVLLWAY). P93 is a topological domain (periplasmic). A helical transmembrane segment spans residues 94 to 114 (SNPYVWCVLVVLIGYGIIGFV). The Cytoplasmic segment spans residues 115 to 131 (DDYRKVVRKDTKGLIAR). Residues 132-152 (WKYFWMSVIALGVAFALYLVG) traverse the membrane as a helical segment. Over 153-167 (KDTPVTQLVVPFFKD) the chain is Periplasmic. A helical membrane pass occupies residues 168–188 (VMPQLGLFYILLSYFVIVGTG). Residues 189 to 198 (NAVNLTDGLD) lie on the Cytoplasmic side of the membrane. Residues 199 to 219 (GLAIMPTVFVAAGFALVAWAT) traverse the membrane as a helical segment. The Periplasmic portion of the chain corresponds to 220 to 235 (GNMNFANYLHIPYLRH). Residues 236–256 (AGELVIVCTAIVGAGLGFLWF) form a helical membrane-spanning segment. Residues 257–262 (NTYPAQ) lie on the Cytoplasmic side of the membrane. The helical transmembrane segment at 263–283 (VFMGDVGSLALGGALGIIAVL) threads the bilayer. Over 284-287 (LRQE) the chain is Periplasmic. A helical transmembrane segment spans residues 288–308 (FLLVIMGGVFVVETLSVILQV). Over 309-337 (GSFKLRGQRIFRMAPIHHHYELKGWPEPR) the chain is Cytoplasmic. A helical transmembrane segment spans residues 338–358 (VIVRFWIISLMLVLIGLATLK). The Periplasmic segment spans residues 359 to 360 (VR).

The protein belongs to the glycosyltransferase 4 family. MraY subfamily. The cofactor is Mg(2+).

It localises to the cell inner membrane. The enzyme catalyses UDP-N-acetyl-alpha-D-muramoyl-L-alanyl-gamma-D-glutamyl-meso-2,6-diaminopimeloyl-D-alanyl-D-alanine + di-trans,octa-cis-undecaprenyl phosphate = di-trans,octa-cis-undecaprenyl diphospho-N-acetyl-alpha-D-muramoyl-L-alanyl-D-glutamyl-meso-2,6-diaminopimeloyl-D-alanyl-D-alanine + UMP. Its pathway is cell wall biogenesis; peptidoglycan biosynthesis. Catalyzes the initial step of the lipid cycle reactions in the biosynthesis of the cell wall peptidoglycan: transfers peptidoglycan precursor phospho-MurNAc-pentapeptide from UDP-MurNAc-pentapeptide onto the lipid carrier undecaprenyl phosphate, yielding undecaprenyl-pyrophosphoryl-MurNAc-pentapeptide, known as lipid I. The protein is Phospho-N-acetylmuramoyl-pentapeptide-transferase of Salmonella paratyphi C (strain RKS4594).